A 449-amino-acid chain; its full sequence is Sensor protein QseC (449 aa).

Residues 1–12 are Cytoplasmic-facing; sequence MKFTQRLSLRVR. Residues 13–33 form a helical membrane-spanning segment; sequence LTLIFLILASVTWLLSSFVAW. At 34-156 the chain is on the periplasmic side; the sequence is KQTTDNVDEL…QEWEYREDMA (123 aa). Residues 157–177 traverse the membrane as a helical segment; the sequence is LAIVAGQLIPWLVALPIMLII. Topologically, residues 178-449 are cytoplasmic; sequence MMVLLGRELA…QGGFEAKVSW (272 aa). Positions 243 to 449 constitute a Histidine kinase domain; sequence DAAHELRSPL…QGGFEAKVSW (207 aa). H246 bears the Phosphohistidine; by autocatalysis mark.

The protein resides in the cell inner membrane. It carries out the reaction ATP + protein L-histidine = ADP + protein N-phospho-L-histidine.. Functionally, member of a two-component regulatory system QseB/QseC. Activates the flagella regulon by activating transcription of FlhDC. May activate QseB by phosphorylation. In Escherichia coli (strain K12), this protein is Sensor protein QseC (qseC).